An 80-amino-acid chain; its full sequence is Cell division activator CedA (80 aa).

It belongs to the CedA family.

Activates the cell division inhibited by chromosomal DNA over-replication. The sequence is that of Cell division activator CedA from Salmonella arizonae (strain ATCC BAA-731 / CDC346-86 / RSK2980).